Reading from the N-terminus, the 461-residue chain is MSRQKSQTSKGHGASKGKEREQRTLIRFKTTLMNTLMDVLRHRPGWVEVKDEGEWDFYWCDVSWLRENFDHTYMDEHVRISHFRNHYELTRKNYMVKNLKRFRKQLEREAGKTEAAKCDFFPKTFEMPCEYHLFVEEFRKNPGITWIMKPVARSQGKGIFLFRRLKDIMDWRKGTAGKKVTSVETQATRANVNPSGSHDTRSSDDQKDDIPVENYVAQRYVENPYLIGGRKFDLRVYVLVMSYIPLRAWLYRDGFARFSNTRFTLNSIDDHYVHLTNVAVQKTSPDYHPKKGCKWTLQRFRQYLASKHGPKAVETLFSDMDNIFIKSLQSVQKVIISDKHCFELYGYDILIDQDLKPWLLEVNASPSLTASSQEDYELKTCLLEDTLHVVDMEARLTGKEKRVGGFDLMWNDGPVSREEGPCDLSGMGNFVTNTHLGCINDRKEQLRQLFRSLQVQKKASS.

Residues 1–10 (MSRQKSQTSK) are compositionally biased toward polar residues. The disordered stretch occupies residues 1–20 (MSRQKSQTSKGHGASKGKER). A TTL domain is found at 22–402 (QRTLIRFKTT…EARLTGKEKR (381 aa)). ATP-binding positions include K149 and 155 to 156 (QG). Q155 provides a ligand contact to a protein. The span at 186–197 (QATRANVNPSGS) shows a compositional bias: polar residues. Residues 186–208 (QATRANVNPSGSHDTRSSDDQKD) are disordered. Positions 198-208 (HDTRSSDDQKD) are enriched in basic and acidic residues. Residues 218–221 (QRYV) and 231–233 (KFD) contribute to the ATP site. R257 lines the L-glutamate pocket. 276–277 (TN) contributes to the ATP binding site. L-glutamate is bound at residue K294. Mg(2+) is bound by residues D348, E361, and N363. K379 is a binding site for L-glutamate.

The protein belongs to the tubulin--tyrosine ligase family. The cofactor is Mg(2+).

It is found in the cytoplasm. It localises to the cytoskeleton. The protein resides in the cilium basal body. The protein localises to the flagellum axoneme. It catalyses the reaction (L-glutamyl)(n)-gamma-L-glutamyl-L-glutamyl-[protein] + L-glutamate + ATP = (L-glutamyl)(n+1)-gamma-L-glutamyl-L-glutamyl-[protein] + ADP + phosphate + H(+). Its function is as follows. Probable tubulin polyglutamylase that generates side chains of glutamate on the gamma-carboxyl group of specific glutamate residues within the C-terminal tail of target proteins. Similar to TTLL1, may acquire enzymatic activity only in complex with other proteins as it is most likely lacking domains important for autonomous activity. Mediates tubulin polyglutamylation which induces establishment of microtubule heterogeneity in sperm flagella, thereby playing a role in normal motile flagella axoneme structure and sperm flagella beating pattern. The polypeptide is Probable tubulin polyglutamylase TTLL9 (Ttll9) (Rattus norvegicus (Rat)).